A 325-amino-acid polypeptide reads, in one-letter code: MQTSLLKPKIIAVESLGENHAKVVMEPFERGYGHTLGNALRRVLLSSMVGYAPTEVTIAGVVHEYSTLDGVQEDVVNLLLNLKGVVFKLHNRDEVTVTLRKEGEGVVTAGDIELAHDCEVINPDHVIAHLSKGGKLDVQIKVEKGRGYVPGNVRRYGEDTAKIIGRIVLDASFSPVRRVSYAVESARVEQRTDLDKLVMNIETTGVITPEEAIRQSARILVDQLSVFAALEGTETAAEAPSRAPQIDPILLRPVDDLELTVRSANCLKAENIYYIGDLIQRTENELLKTPNLGRKSLNEIKEVLASRGLTLGMKLENWPPAGLDK.

Residues methionine 1–glutamate 231 form an alpha N-terminal domain (alpha-NTD) region. The tract at residues isoleucine 246–lysine 325 is alpha C-terminal domain (alpha-CTD).

Belongs to the RNA polymerase alpha chain family. Homodimer. The RNAP catalytic core consists of 2 alpha, 1 beta, 1 beta' and 1 omega subunit. When a sigma factor is associated with the core the holoenzyme is formed, which can initiate transcription.

It carries out the reaction RNA(n) + a ribonucleoside 5'-triphosphate = RNA(n+1) + diphosphate. Its function is as follows. DNA-dependent RNA polymerase catalyzes the transcription of DNA into RNA using the four ribonucleoside triphosphates as substrates. This chain is DNA-directed RNA polymerase subunit alpha, found in Burkholderia multivorans (strain ATCC 17616 / 249).